Here is a 137-residue protein sequence, read N- to C-terminus: Large-conductance mechanosensitive channel (137 aa).

Transmembrane regions (helical) follow at residues 9–29 (AFAVKGNVVDMAVGIIIGAAF) and 79–99 (IQTILDFIIVAFAIFMGVKVI).

This sequence belongs to the MscL family. As to quaternary structure, homopentamer.

It is found in the cell inner membrane. Functionally, channel that opens in response to stretch forces in the membrane lipid bilayer. May participate in the regulation of osmotic pressure changes within the cell. The protein is Large-conductance mechanosensitive channel of Pseudomonas entomophila (strain L48).